Reading from the N-terminus, the 216-residue chain is Regulator of G-protein signaling 19 (216 aa).

Basic and acidic residues predominate over residues 1 to 19 (MPTPHEAEKQHTGPEEADR). The interval 1 to 30 (MPTPHEAEKQHTGPEEADRPPSMSSHDAAP) is disordered. Position 24 is a phosphoserine; by CK2 (Ser-24). The RGS domain occupies 90 to 206 (SFDKLMHSPT…LTSPTYRSLL (117 aa)). Residue Ser-97 is modified to Phosphoserine. Ser-151 is subject to Phosphoserine; by MAPK1 and MAPK3. Residues 207–216 (LQGAPQSSEA) form an interaction with GIPC region.

As to quaternary structure, interacts with GIPC PDZ domain. Interacts with GNAO1. Fatty acylated. Heavily palmitoylated in the cysteine string motif. Post-translationally, phosphorylated, mainly on serine residues.

The protein resides in the membrane. Functionally, inhibits signal transduction by increasing the GTPase activity of G protein alpha subunits thereby driving them into their inactive GDP-bound form. Binds to G-alpha subfamily 1 members, predominantly to G(i)-alpha-3. Activity on G(z)-alpha is inhibited by phosphorylation and palmitoylation of the G-protein. This is Regulator of G-protein signaling 19 (Rgs19) from Rattus norvegicus (Rat).